A 420-amino-acid polypeptide reads, in one-letter code: F-box/LRR-repeat protein At2g43260 (420 aa).

The F-box domain occupies 7-53 (NPNSIDILPELLEEVLLRLPTKSILKCRIVSKQWRSLLESSRFAERH). LRR repeat units lie at residues 112 to 135 (QDWI…LNHN) and 226 to 251 (VYRI…QITV).

The chain is F-box/LRR-repeat protein At2g43260 from Arabidopsis thaliana (Mouse-ear cress).